The sequence spans 351 residues: Trans-enoyl reductase grgB (351 aa).

Residues 10–346 enclose the Enoyl reductase (ER) domain; that stretch reads GAESGGYRLA…GKVHAKKLVV (337 aa). NADP(+)-binding positions include 161-164, 184-187, Tyr-202, 249-250, and 339-340; these read ATAT, SPAN, LE, and VH.

This sequence belongs to the zinc-containing alcohol dehydrogenase family.

It functions in the pathway secondary metabolite biosynthesis. In terms of biological role, trans-enoyl reductase; part of the gene cluster that mediates the biosynthesis of gregatin A, a fungal polyketide featuring an alkylated furanone core. The PKS grgA synthesizes C11 and C4 polyketide chains in the presence and absence of the trans-enoyl reductase grgB, respectively. The polyketide transferase grgF is then responsible for the fusion of the two carbon chains to produce the furanone skeleton of gregatin A. Next, the cytochrome P450 monooxygenase grgG accepts performs the oxidative cyclization to furnish the gregatin scaffold and leads to the formation of desmethylgregatin A. Finally, the O-methyltransferase grgD methylates the carboxyl group of desmethylgregatin A to provide gregatin A. This chain is Trans-enoyl reductase grgB, found in Penicillium sp.